Consider the following 421-residue polypeptide: D-amino-acid oxidase (421 aa).

Ala12, Gly13, Ala14, Val15, Gly47, Gly64, Ile65, Lys225, Ala226, Arg359, Gly385, Gly388, and Leu389 together coordinate FAD. Arg359 contributes to the D-proline binding site. Arg359 lines the D-serine pocket.

It belongs to the DAMOX/DASOX family. It depends on FAD as a cofactor.

It localises to the cytoplasm. The protein localises to the secreted. Its subcellular location is the cell wall. It catalyses the reaction a D-alpha-amino acid + O2 + H2O = a 2-oxocarboxylate + H2O2 + NH4(+). Its function is as follows. Catalyzes the oxidative deamination of D-amino acids with broad substrate specificity. In Bradyrhizobium diazoefficiens (strain JCM 10833 / BCRC 13528 / IAM 13628 / NBRC 14792 / USDA 110), this protein is D-amino-acid oxidase.